The primary structure comprises 680 residues: Oligopeptidase A (680 aa).

His-469 is a Zn(2+) binding site. Glu-470 is an active-site residue. Positions 473 and 476 each coordinate Zn(2+).

It belongs to the peptidase M3 family. Zn(2+) is required as a cofactor.

It carries out the reaction Hydrolysis of oligopeptides, with broad specificity. Gly or Ala commonly occur as P1 or P1' residues, but more distant residues are also important, as is shown by the fact that Z-Gly-Pro-Gly-|-Gly-Pro-Ala is cleaved, but not Z-(Gly)(5).. Its function is as follows. May play a specific role in the degradation of signal peptides after they are released from precursor forms of secreted proteins. Can cleave N-acetyl-L-Ala(4). This is Oligopeptidase A (prlC) from Escherichia coli (strain K12).